Consider the following 337-residue polypeptide: Tetraacyldisaccharide 4'-kinase (337 aa).

ATP is bound at residue 72–79 (TVGGSGKT).

The protein belongs to the LpxK family.

It carries out the reaction a lipid A disaccharide + ATP = a lipid IVA + ADP + H(+). Its pathway is glycolipid biosynthesis; lipid IV(A) biosynthesis; lipid IV(A) from (3R)-3-hydroxytetradecanoyl-[acyl-carrier-protein] and UDP-N-acetyl-alpha-D-glucosamine: step 6/6. In terms of biological role, transfers the gamma-phosphate of ATP to the 4'-position of a tetraacyldisaccharide 1-phosphate intermediate (termed DS-1-P) to form tetraacyldisaccharide 1,4'-bis-phosphate (lipid IVA). This is Tetraacyldisaccharide 4'-kinase from Shewanella sediminis (strain HAW-EB3).